Reading from the N-terminus, the 396-residue chain is L-lactate dehydrogenase (396 aa).

Residues methionine 1–glycine 380 form the FMN hydroxy acid dehydrogenase domain. Tyrosine 24 lines the substrate pocket. 2 residues coordinate FMN: serine 106 and glutamine 127. Tyrosine 129 is a binding site for substrate. Residue threonine 155 coordinates FMN. Arginine 164 provides a ligand contact to substrate. An FMN-binding site is contributed by lysine 251. The Proton acceptor role is filled by histidine 275. Arginine 278 is a binding site for substrate. FMN is bound at residue aspartate 306–arginine 330.

It belongs to the FMN-dependent alpha-hydroxy acid dehydrogenase family. FMN serves as cofactor.

Its subcellular location is the cell inner membrane. It catalyses the reaction (S)-lactate + A = pyruvate + AH2. In terms of biological role, catalyzes the conversion of L-lactate to pyruvate. Is coupled to the respiratory chain. In Citrobacter koseri (strain ATCC BAA-895 / CDC 4225-83 / SGSC4696), this protein is L-lactate dehydrogenase.